We begin with the raw amino-acid sequence, 155 residues long: SsrA-binding protein (155 aa).

The protein belongs to the SmpB family.

The protein localises to the cytoplasm. Required for rescue of stalled ribosomes mediated by trans-translation. Binds to transfer-messenger RNA (tmRNA), required for stable association of tmRNA with ribosomes. tmRNA and SmpB together mimic tRNA shape, replacing the anticodon stem-loop with SmpB. tmRNA is encoded by the ssrA gene; the 2 termini fold to resemble tRNA(Ala) and it encodes a 'tag peptide', a short internal open reading frame. During trans-translation Ala-aminoacylated tmRNA acts like a tRNA, entering the A-site of stalled ribosomes, displacing the stalled mRNA. The ribosome then switches to translate the ORF on the tmRNA; the nascent peptide is terminated with the 'tag peptide' encoded by the tmRNA and targeted for degradation. The ribosome is freed to recommence translation, which seems to be the essential function of trans-translation. The chain is SsrA-binding protein from Bacillus cereus (strain B4264).